We begin with the raw amino-acid sequence, 201 residues long: Probable molybdenum cofactor guanylyltransferase (201 aa).

GTP is bound by residues 16 to 18 (LAG), Lys28, Asp75, and Asp107. Asp107 is a binding site for Mg(2+).

Belongs to the MobA family. Requires Mg(2+) as cofactor.

It localises to the cytoplasm. It catalyses the reaction Mo-molybdopterin + GTP + H(+) = Mo-molybdopterin guanine dinucleotide + diphosphate. Its function is as follows. Transfers a GMP moiety from GTP to Mo-molybdopterin (Mo-MPT) cofactor (Moco or molybdenum cofactor) to form Mo-molybdopterin guanine dinucleotide (Mo-MGD) cofactor. This chain is Probable molybdenum cofactor guanylyltransferase, found in Mycobacterium marinum (strain ATCC BAA-535 / M).